The chain runs to 629 residues: Chaperone protein HtpG (629 aa).

The segment at 1-337 is a; substrate-binding; it reads MAASKETMQF…SSDLPLNVSR (337 aa). Residues 338–554 form a b region; it reads EILQGNRVID…ERDMALYMQQ (217 aa). Residues 555 to 629 are c; the sequence is LLKQAGHEIS…INQLMLALAG (75 aa).

Belongs to the heat shock protein 90 family. In terms of assembly, homodimer.

The protein resides in the cytoplasm. Molecular chaperone. Has ATPase activity. This Acidithiobacillus ferrooxidans (strain ATCC 23270 / DSM 14882 / CIP 104768 / NCIMB 8455) (Ferrobacillus ferrooxidans (strain ATCC 23270)) protein is Chaperone protein HtpG.